The primary structure comprises 461 residues: Chromosomal replication initiator protein DnaA (461 aa).

The segment at 1–83 (MDHSPWQRCL…LRFDVGSKPT (83 aa)) is domain I, interacts with DnaA modulators. Residues 83–124 (TIDNSVTNSPVSRNTGGNESLFAKATSAPKVAEPESNIPKKT) are domain II. Positions 125–341 (NVRLNYTFEN…GALNRVIANA (217 aa)) are domain III, AAA+ region. ATP-binding residues include Gly169, Gly171, Lys172, and Thr173. Positions 342–461 (NFTGRAITID…YSNLIRTLSS (120 aa)) are domain IV, binds dsDNA.

The protein belongs to the DnaA family. Oligomerizes as a right-handed, spiral filament on DNA at oriC.

The protein localises to the cytoplasm. Plays an essential role in the initiation and regulation of chromosomal replication. ATP-DnaA binds to the origin of replication (oriC) to initiate formation of the DNA replication initiation complex once per cell cycle. Binds the DnaA box (a 9 base pair repeat at the origin) and separates the double-stranded (ds)DNA. Forms a right-handed helical filament on oriC DNA; dsDNA binds to the exterior of the filament while single-stranded (ss)DNA is stabiized in the filament's interior. The ATP-DnaA-oriC complex binds and stabilizes one strand of the AT-rich DNA unwinding element (DUE), permitting loading of DNA polymerase. After initiation quickly degrades to an ADP-DnaA complex that is not apt for DNA replication. Binds acidic phospholipids. This is Chromosomal replication initiator protein DnaA from Colwellia psychrerythraea (strain 34H / ATCC BAA-681) (Vibrio psychroerythus).